Reading from the N-terminus, the 276-residue chain is NH(3)-dependent NAD(+) synthetase (276 aa).

Position 43–50 (43–50 (GISGGVDS)) interacts with ATP. Residue D49 coordinates Mg(2+). Residue R146 coordinates deamido-NAD(+). T166 contacts ATP. E171 serves as a coordination point for Mg(2+). Positions 179 and 186 each coordinate deamido-NAD(+). ATP is bound by residues K195 and T217. 266-267 (HK) contacts deamido-NAD(+).

The protein belongs to the NAD synthetase family. In terms of assembly, homodimer.

It carries out the reaction deamido-NAD(+) + NH4(+) + ATP = AMP + diphosphate + NAD(+) + H(+). It participates in cofactor biosynthesis; NAD(+) biosynthesis; NAD(+) from deamido-NAD(+) (ammonia route): step 1/1. Functionally, catalyzes the ATP-dependent amidation of deamido-NAD to form NAD. Uses ammonia as a nitrogen source. The polypeptide is NH(3)-dependent NAD(+) synthetase (Shewanella sediminis (strain HAW-EB3)).